A 1200-amino-acid chain; its full sequence is Zinc finger protein 804A (1200 aa).

The C2H2-type zinc-finger motif lies at 57-81; that stretch reads FYCELCDKQYYKHQEFDNHINSYDH. Disordered regions lie at residues 252-280, 343-367, 582-687, 727-777, 799-828, and 874-949; these read STSH…PEAM, DGPV…RTSA, HWFH…NCGG, EDDG…SDES, QPKK…NYPM, and PYNP…TNPE. Over residues 585 to 603 the composition is skewed to basic residues; the sequence is HKSRRKKKRRKLCRYHPGK. Residues 604–666 show a composition bias toward basic and acidic residues; the sequence is SSKEPEGSGK…ASTHLGEKET (63 aa). 2 stretches are compositionally biased toward polar residues: residues 667–687 and 732–756; these read MNTT…NCGG and LASQ…SLTN. Basic residues predominate over residues 800 to 811; it reads PKKKRRRKRSRL. Polar residues predominate over residues 891 to 944; sequence TETTPCDSSQTSNDLATPVNVTRDPSNSTTDNTLLEHNQRSQTTNSNEKQTPFK.

This is Zinc finger protein 804A (Znf804a) from Mus musculus (Mouse).